The primary structure comprises 405 residues: Argininosuccinate synthase (405 aa).

ATP-binding positions include 10–18 and Ala37; that span reads AYSGGLDTS. Residues Tyr88 and Ser93 each coordinate L-citrulline. Position 118 (Gly118) interacts with ATP. Residues Thr120, Asn124, and Asp125 each coordinate L-aspartate. Asn124 is a binding site for L-citrulline. Residues Arg128, Ser179, Ser188, Glu264, and Tyr276 each contribute to the L-citrulline site.

The protein belongs to the argininosuccinate synthase family. Type 1 subfamily. In terms of assembly, homotetramer.

It localises to the cytoplasm. The catalysed reaction is L-citrulline + L-aspartate + ATP = 2-(N(omega)-L-arginino)succinate + AMP + diphosphate + H(+). The protein operates within amino-acid biosynthesis; L-arginine biosynthesis; L-arginine from L-ornithine and carbamoyl phosphate: step 2/3. The protein is Argininosuccinate synthase of Pseudomonas putida (strain GB-1).